Reading from the N-terminus, the 288-residue chain is ATP synthase gamma chain (288 aa).

The protein belongs to the ATPase gamma chain family. In terms of assembly, F-type ATPases have 2 components, CF(1) - the catalytic core - and CF(0) - the membrane proton channel. CF(1) has five subunits: alpha(3), beta(3), gamma(1), delta(1), epsilon(1). CF(0) has three main subunits: a, b and c.

The protein localises to the cell membrane. Functionally, produces ATP from ADP in the presence of a proton gradient across the membrane. The gamma chain is believed to be important in regulating ATPase activity and the flow of protons through the CF(0) complex. In Staphylococcus saprophyticus subsp. saprophyticus (strain ATCC 15305 / DSM 20229 / NCIMB 8711 / NCTC 7292 / S-41), this protein is ATP synthase gamma chain.